A 182-amino-acid polypeptide reads, in one-letter code: Receptor activity-modifying protein 2 (182 aa).

Residues 1 to 45 (MAPLRVERAPGGSQLAVTSAQRPAALRLPPLLLLLLLLLLGAVST) form the signal peptide. Topologically, residues 46–150 (SPESLNQSHP…VQPTFSDPPE (105 aa)) are extracellular. N-linked (GlcNAc...) asparagine glycans are attached at residues asparagine 51, asparagine 92, and asparagine 137. 2 cysteine pairs are disulfide-bonded: cysteine 76–cysteine 106 and cysteine 91–cysteine 138. Residues 151-172 (DVLLAMIIAPICLIPFLVTLVV) form a helical membrane-spanning segment. Over 173–182 (WRSKDGDAQA) the chain is Cytoplasmic.

It belongs to the RAMP family. As to quaternary structure, heterodimer of CALCRL and RAMP2; the interaction forms the receptor complex for adrenomedullin/ADM. Heterodimer of CALCR and RAMP2; interaction forms the AMYR2 receptor complex for calcitonin/CALC and amylin/IAPP.

It localises to the cell membrane. Accessory protein that interacts with and modulates the function of G-protein coupled receptors including calcitonin gene-related peptide type 1 receptor (CALCRL) and calcitonin receptor (CALCR). Required for the transport of CALCRL to the plasma membrane. Together with CALCRL, form a receptor complex for adrenomedullin/ADM. Together with CALCR, act as a receptor complex for calcitonin/CT/CALC. Together with CALCR, also act as a receptor complex for amylin/IAPP. This Rattus norvegicus (Rat) protein is Receptor activity-modifying protein 2.